The chain runs to 152 residues: MENRVADELIHLPLPEVQAVNVINVRHGDGDGDGENGWERHLDDEQMQAMRLENPQVAMLLDAPHEPPIELHHMLEPVNVPERPRKKRSFLTISKPFHVQPERCALISNGWRAVQCVQPEKRGECFANYLIKHMNSRNYPNGEGLPKRWGQY.

It belongs to the male-specific scotti family.

In terms of biological role, post-meiotically transcribed gene that has a role in late spermiogenesis; required for actin cone progression during spermatid individualization. The sequence is that of Male-specific protein scotti from Drosophila mojavensis (Fruit fly).